The following is a 629-amino-acid chain: Chaperone protein HtpG (629 aa).

The segment at 1–335 (MSSNPTSSVR…TEDLPLNVSR (335 aa)) is a; substrate-binding. A b region spans residues 336–547 (ELVQASPVMA…KDALDSQFEK (212 aa)). Residues 548–629 (MMKMMNKDAD…NELVEAATRS (82 aa)) form a c region.

It belongs to the heat shock protein 90 family. Homodimer.

It localises to the cytoplasm. Its function is as follows. Molecular chaperone. Has ATPase activity. This is Chaperone protein HtpG from Chlorobaculum tepidum (strain ATCC 49652 / DSM 12025 / NBRC 103806 / TLS) (Chlorobium tepidum).